A 109-amino-acid chain; its full sequence is Spermidine export protein MdtI (109 aa).

4 consecutive transmembrane segments (helical) span residues 6-26 (FYPIAFLILAVMLEIVANILL), 36-56 (WLGILSLLSVLGAFSALAQAV), 64-84 (AYALWGGFGIAATVAAGWILF), and 88-108 (LNYKGWIGLILLLAGMVMIKL).

Belongs to the drug/metabolite transporter (DMT) superfamily. Small multidrug resistance (SMR) (TC 2.A.7.1) family. MdtI subfamily. In terms of assembly, forms a complex with MdtJ.

The protein resides in the cell inner membrane. Catalyzes the excretion of spermidine. This is Spermidine export protein MdtI from Yersinia pseudotuberculosis serotype O:1b (strain IP 31758).